A 34-amino-acid polypeptide reads, in one-letter code: Somatostatin (34 aa).

The segment at 1-20 (AVERPRQDGQVHEPPGRERK) is disordered. Cysteines 23 and 34 form a disulfide.

It belongs to the somatostatin family.

It localises to the secreted. Its function is as follows. Somatostatin inhibits the release of somatotropin. The chain is Somatostatin (sst) from Myxine glutinosa (Atlantic hagfish).